The primary structure comprises 212 residues: DNA-directed RNA polymerase III subunit RPC8 (212 aa).

Residue Ser162 is modified to Phosphoserine. Over residues 166–184 (RELEERAQLENEIEGKNEE) the composition is skewed to basic and acidic residues. The tract at residues 166–194 (RELEERAQLENEIEGKNEETPQNEKPPAY) is disordered.

The protein belongs to the eukaryotic RPB7/RPC8 RNA polymerase subunit family. Component of the RNA polymerase III (Pol III) complex consisting of 17 subunits. RPC25/RPC8 and RPC17/RPC9 form a Pol III subcomplex.

It localises to the nucleus. Functionally, DNA-dependent RNA polymerase catalyzes the transcription of DNA into RNA using the four ribonucleoside triphosphates as substrates. Specific peripheric component of RNA polymerase III which synthesizes small RNAs, such as 5S rRNA and tRNA. The RPC25/RPC8-RPC17/RPC9 subcomplex may bind Pol III transcripts emerging from the adjacent exit pore during elongation. In Saccharomyces cerevisiae (strain ATCC 204508 / S288c) (Baker's yeast), this protein is DNA-directed RNA polymerase III subunit RPC8 (RPC25).